Here is a 175-residue protein sequence, read N- to C-terminus: Co-chaperone protein HscB homolog (175 aa).

The region spanning 7–79 is the J domain; it reads SHFDLFDLPA…LKRATYLLHL (73 aa).

This sequence belongs to the HscB family. As to quaternary structure, interacts with HscA and stimulates its ATPase activity.

Its function is as follows. Co-chaperone involved in the maturation of iron-sulfur cluster-containing proteins. Seems to help targeting proteins to be folded toward HscA. The sequence is that of Co-chaperone protein HscB homolog from Paraburkholderia phytofirmans (strain DSM 17436 / LMG 22146 / PsJN) (Burkholderia phytofirmans).